The sequence spans 565 residues: Heme/hemopexin transporter protein HuxB (565 aa).

The first 26 residues, 1-26 (MKMRPRYSVIASAVSLGFVLSKSVMA), serve as a signal peptide directing secretion. The 78-residue stretch at 73-150 (FPLTQVQILD…GTVKILLLKG (78 aa)) folds into the POTRA domain.

The protein belongs to the TPS (TC 1.B.20) family.

Its subcellular location is the cell outer membrane. In terms of biological role, likely functions in the release of soluble HxuA from the cell. Functionally, probable member of a two partner secretion pathway (TPS) in which it mediates the secretion of HuxA. The chain is Heme/hemopexin transporter protein HuxB (hxuB) from Haemophilus influenzae (strain 86-028NP).